The primary structure comprises 520 residues: Keratin, type II cytoskeletal 4 (520 aa).

The tract at residues 1–136 is head; that stretch reads MIARQQCVRG…DPEIQKVRTE (136 aa). R13 is subject to Omega-N-methylarginine. The interval 137–172 is coil 1A; the sequence is EREQIKLLNNKFASFIDKVQFLEQQNKVLETKWNLL. Residues 137-450 enclose the IF rod domain; the sequence is EREQIKLLNN…KLLEGEEYRM (314 aa). The interval 173 to 191 is linker 1; it reads QQQTTTTSSKNLEPLFETY. The interval 192–284 is coil 1B; sequence LSVLRKQLDT…LYDAELSQMQ (93 aa). A linker 12 region spans residues 285 to 307; that stretch reads THVSDTSVVLSMDNNRNLDLDSI. Residues 308–447 form a coil 2 region; the sequence is IAEVRAQYEE…TYRKLLEGEE (140 aa). The segment at 448-520 is tail; it reads YRMSGECQSA…ISTTTLNKRR (73 aa). The tract at residues 500–520 is disordered; that stretch reads GSVSGSSSSKIISTTTLNKRR. Residues 503-514 show a composition bias toward low complexity; the sequence is SGSSSSKIISTT.

Belongs to the intermediate filament family. As to quaternary structure, heterotetramer of two type I and two type II keratins. Keratin-4 is generally associated with keratin-13. Detected in the suprabasal layer of the stratified epithelium of the esophagus, exocervix, vagina, mouth and lingual mucosa, and in cells and cell clusters in the mucosa and serous gland ducts of the esophageal submucosa (at protein level). Expressed widely in the exocervix and esophageal epithelium, with lowest levels detected in the basal cell layer.

The sequence is that of Keratin, type II cytoskeletal 4 (KRT4) from Homo sapiens (Human).